The primary structure comprises 153 residues: MSSILIVRIRGSASTPWDLQEVLEMLRLSKQYSAMVYPKQDDIVGMVRKVQSYVTWGELNMDGAKALMARIETVKGALDQSFIEKELGLSTEDFIKKLVDGELKLNSIPSIKLPIRLHPPRKGFKGKINSFIGSGGELGYRGEKINELVRRMV.

Belongs to the universal ribosomal protein uL30 family. In terms of assembly, part of the 50S ribosomal subunit.

The chain is Large ribosomal subunit protein uL30 from Metallosphaera sedula (strain ATCC 51363 / DSM 5348 / JCM 9185 / NBRC 15509 / TH2).